Reading from the N-terminus, the 349-residue chain is Phloroglucinol synthase (349 aa).

Residue Cys138 is part of the active site.

The protein belongs to the thiolase-like superfamily. Chalcone/stilbene synthases family.

It carries out the reaction 3 malonyl-CoA + 3 H(+) = 1,3,5-trihydroxybenzene + 3 CO2 + 3 CoA. It participates in antibiotic biosynthesis. In terms of biological role, type III polyketide synthase that catalyzes the synthesis of phloroglucinol from three molecules of malonyl-CoA. In addition to its ability to produce phloroglucinol from malonyl-CoA, it exhibits broad substrate specificity, accepting C4-C12 aliphatic acyl-CoAs and phenylacetyl-CoA as the starters to form C6-polyoxoalkylated alpha-pyrones from sequential condensation with malonyl-CoA. This chain is Phloroglucinol synthase, found in Pseudomonas fluorescens (strain ATCC BAA-477 / NRRL B-23932 / Pf-5).